The sequence spans 259 residues: Binding partner of ACD11 1 (259 aa).

Positions 6 to 77 (RSVKVGNLSS…QSVIIELAPN (72 aa)) constitute an RRM domain. The segment at 219–259 (GEVGQKTKEKVEAEQPSQPAQSQQQLPEGYSPIHSSEYSKN) is disordered. Residues 232-243 (EQPSQPAQSQQQ) are compositionally biased toward low complexity.

Interacts with ACD11, PR1F2 and PR1F3.

The protein resides in the cytoplasm. It localises to the membrane. In Arabidopsis thaliana (Mouse-ear cress), this protein is Binding partner of ACD11 1 (BPA1).